A 561-amino-acid polypeptide reads, in one-letter code: DNA ligase B (561 aa).

The N6-AMP-lysine intermediate role is filled by Lys-125.

The protein belongs to the NAD-dependent DNA ligase family. LigB subfamily.

The catalysed reaction is NAD(+) + (deoxyribonucleotide)n-3'-hydroxyl + 5'-phospho-(deoxyribonucleotide)m = (deoxyribonucleotide)n+m + AMP + beta-nicotinamide D-nucleotide.. Its function is as follows. Catalyzes the formation of phosphodiester linkages between 5'-phosphoryl and 3'-hydroxyl groups in double-stranded DNA using NAD as a coenzyme and as the energy source for the reaction. The protein is DNA ligase B of Salmonella agona (strain SL483).